Consider the following 185-residue polypeptide: Elongation factor P (185 aa).

It belongs to the elongation factor P family.

The protein localises to the cytoplasm. Its pathway is protein biosynthesis; polypeptide chain elongation. Its function is as follows. Involved in peptide bond synthesis. Stimulates efficient translation and peptide-bond synthesis on native or reconstituted 70S ribosomes in vitro. Probably functions indirectly by altering the affinity of the ribosome for aminoacyl-tRNA, thus increasing their reactivity as acceptors for peptidyl transferase. The polypeptide is Elongation factor P (Gloeothece citriformis (strain PCC 7424) (Cyanothece sp. (strain PCC 7424))).